The following is a 260-amino-acid chain: Ubiquinone/menaquinone biosynthesis C-methyltransferase UbiE (260 aa).

S-adenosyl-L-methionine-binding positions include threonine 83, aspartate 104, 132 to 133 (NA), and serine 149.

This sequence belongs to the class I-like SAM-binding methyltransferase superfamily. MenG/UbiE family.

The enzyme catalyses a 2-demethylmenaquinol + S-adenosyl-L-methionine = a menaquinol + S-adenosyl-L-homocysteine + H(+). The catalysed reaction is a 2-methoxy-6-(all-trans-polyprenyl)benzene-1,4-diol + S-adenosyl-L-methionine = a 5-methoxy-2-methyl-3-(all-trans-polyprenyl)benzene-1,4-diol + S-adenosyl-L-homocysteine + H(+). The protein operates within quinol/quinone metabolism; menaquinone biosynthesis; menaquinol from 1,4-dihydroxy-2-naphthoate: step 2/2. It functions in the pathway cofactor biosynthesis; ubiquinone biosynthesis. In terms of biological role, methyltransferase required for the conversion of demethylmenaquinol (DMKH2) to menaquinol (MKH2) and the conversion of 2-polyprenyl-6-methoxy-1,4-benzoquinol (DDMQH2) to 2-polyprenyl-3-methyl-6-methoxy-1,4-benzoquinol (DMQH2). In Vibrio vulnificus (strain CMCP6), this protein is Ubiquinone/menaquinone biosynthesis C-methyltransferase UbiE.